A 462-amino-acid polypeptide reads, in one-letter code: NAD(P) transhydrogenase subunit beta (462 aa).

The Periplasmic segment spans residues 1–3; the sequence is MSG. A helical transmembrane segment spans residues 4–24; it reads GLVTAAYIVAAILFIFSLAGL. The Cytoplasmic segment spans residues 25-45; the sequence is SKHETSRQGNNFGIAGMAIAL. The helical transmembrane segment at 46 to 66 threads the bilayer; the sequence is IATIFGPDTGNVGWILLAMVI. Over 67–82 the chain is Periplasmic; sequence GGAIGIRLAKKVEMTE. Residues 83-103 form a helical membrane-spanning segment; the sequence is MPELVAILHSFVGLAAVLVGF. The Cytoplasmic segment spans residues 104-115; the sequence is NSYLHHDAGMAP. Residues 116–136 form a helical membrane-spanning segment; it reads ILVNIHLTEVFLGIFIGAVTF. Residues 137-164 lie on the Periplasmic side of the membrane; the sequence is TGSVVAFGKLCGKISSKPLMLPNRHKMN. A helical transmembrane segment spans residues 165–185; it reads LAALVVSFLLLIVFVRTDSVG. Over 186-188 the chain is Cytoplasmic; it reads LQV. A helical membrane pass occupies residues 189-209; that stretch reads LALLIMTAIALVFGWHLVASI. At 210 to 215 the chain is on the periplasmic side; it reads GGADMP. The chain crosses the membrane as a helical span at residues 216 to 236; sequence VVVSMLNSYSGWAAAAAGFML. The Cytoplasmic segment spans residues 237–239; it reads SND. A helical transmembrane segment spans residues 240–260; the sequence is LLIVTGALVGSSGAILSYIMC. Over 261–308 the chain is Periplasmic; that stretch reads KAMNRSFISVIAGGFGTDGSSTGDDQEVGEHREITAEETAELLKNSHS. A helical transmembrane segment spans residues 309–329; that stretch reads VIITPGYGMAVAQAQYPVAEI. The Cytoplasmic portion of the chain corresponds to 330-462; that stretch reads TEKLRARGIN…ASVDAILKAL (133 aa).

This sequence belongs to the PNT beta subunit family. As to quaternary structure, heterodimer of an alpha and a beta chain.

It is found in the cell inner membrane. The enzyme catalyses NAD(+) + NADPH + H(+)(in) = NADH + NADP(+) + H(+)(out). Functionally, the transhydrogenation between NADH and NADP is coupled to respiration and ATP hydrolysis and functions as a proton pump across the membrane. In Escherichia coli O157:H7, this protein is NAD(P) transhydrogenase subunit beta (pntB).